The following is a 426-amino-acid chain: Glutamate-1-semialdehyde 2,1-aminomutase (426 aa).

N6-(pyridoxal phosphate)lysine is present on Lys265.

It belongs to the class-III pyridoxal-phosphate-dependent aminotransferase family. HemL subfamily. As to quaternary structure, homodimer. Pyridoxal 5'-phosphate serves as cofactor.

The protein localises to the cytoplasm. It carries out the reaction (S)-4-amino-5-oxopentanoate = 5-aminolevulinate. Its pathway is porphyrin-containing compound metabolism; protoporphyrin-IX biosynthesis; 5-aminolevulinate from L-glutamyl-tRNA(Glu): step 2/2. The chain is Glutamate-1-semialdehyde 2,1-aminomutase from Erwinia tasmaniensis (strain DSM 17950 / CFBP 7177 / CIP 109463 / NCPPB 4357 / Et1/99).